The following is a 700-amino-acid chain: Calpain-2 catalytic subunit (700 aa).

Position 2 is an N-acetylalanine (Ala2). Positions 2–19 (AGIAIKLAKDREAAEGLG) are cleaved as a propeptide — anchors to the small subunit. Positions 45 to 344 (LFQDPSFPAL…YSRLEICNLT (300 aa)) constitute a Calpain catalytic domain. Ca(2+) is bound by residues Ile89, Gly91, and Asp96. Cys105 is a catalytic residue. Positions 175, 229, and 230 each coordinate Ca(2+). Residues His262 and Asn286 contribute to the active site. Ca(2+)-binding residues include Glu292, Asp299, Gln319, and Glu323. The interval 345-514 (PDTLTCDSYK…KKADYQAVDD (170 aa)) is domain III. A linker region spans residues 515–529 (EIEANIEEIDANEED). The tract at residues 530–700 (IDDGFRRLFV…LASWLSFSVL (171 aa)) is domain IV. Ala542, Asp545, Glu547, Glu552, Asp585, Asp587, Ser589, Lys591, Glu596, Asp615, Asp617, Ser619, Thr621, Glu626, Asp658, and Asn661 together coordinate Ca(2+). EF-hand domains follow at residues 572–605 (FSIE…TKIQ) and 602–637 (TKIQ…AGFK).

This sequence belongs to the peptidase C2 family. As to quaternary structure, forms a heterodimer with a small (regulatory) subunit (CAPNS1). Interacts with CPEB3; this leads to cleavage of CPEB3. Requires Ca(2+) as cofactor. Ubiquitous.

The protein localises to the cytoplasm. It localises to the cell membrane. The enzyme catalyses Broad endopeptidase specificity.. Activated by 200-1000 micromolar concentrations of calcium and inhibited by calpastatin. Its function is as follows. Calcium-regulated non-lysosomal thiol-protease which catalyzes limited proteolysis of substrates involved in cytoskeletal remodeling and signal transduction. Proteolytically cleaves MYOC at 'Arg-226'. Proteolytically cleaves CPEB3 following neuronal stimulation which abolishes CPEB3 translational repressor activity, leading to translation of CPEB3 target mRNAs. In Mus musculus (Mouse), this protein is Calpain-2 catalytic subunit (Capn2).